The following is a 491-amino-acid chain: Glutamate--tRNA ligase (491 aa).

Positions 13-23 match the 'HIGH' region motif; it reads PSPTGFLHIGN. Zn(2+)-binding residues include cysteine 110, cysteine 112, cysteine 137, and histidine 139. A 'KMSKS' region motif is present at residues 254–258; the sequence is KLSKR. Lysine 257 contacts ATP.

This sequence belongs to the class-I aminoacyl-tRNA synthetase family. Glutamate--tRNA ligase type 1 subfamily. Monomer. Zn(2+) serves as cofactor.

Its subcellular location is the cytoplasm. It carries out the reaction tRNA(Glu) + L-glutamate + ATP = L-glutamyl-tRNA(Glu) + AMP + diphosphate. In terms of biological role, catalyzes the attachment of glutamate to tRNA(Glu) in a two-step reaction: glutamate is first activated by ATP to form Glu-AMP and then transferred to the acceptor end of tRNA(Glu). This chain is Glutamate--tRNA ligase, found in Listeria welshimeri serovar 6b (strain ATCC 35897 / DSM 20650 / CCUG 15529 / CIP 8149 / NCTC 11857 / SLCC 5334 / V8).